A 246-amino-acid chain; its full sequence is Probable hydroxyethylthiazole kinase (246 aa).

Met-50 is a substrate binding site. Residues Arg-125 and Thr-145 each coordinate ATP. Gly-172 contributes to the substrate binding site.

Belongs to the Thz kinase family. Mg(2+) serves as cofactor.

The catalysed reaction is 5-(2-hydroxyethyl)-4-methylthiazole + ATP = 4-methyl-5-(2-phosphooxyethyl)-thiazole + ADP + H(+). It participates in cofactor biosynthesis; thiamine diphosphate biosynthesis; 4-methyl-5-(2-phosphoethyl)-thiazole from 5-(2-hydroxyethyl)-4-methylthiazole: step 1/1. In terms of biological role, catalyzes the phosphorylation of the hydroxyl group of 4-methyl-5-beta-hydroxyethylthiazole (THZ). In Agrobacterium fabrum (strain C58 / ATCC 33970) (Agrobacterium tumefaciens (strain C58)), this protein is Probable hydroxyethylthiazole kinase (thiM).